The following is a 227-amino-acid chain: LexA repressor (227 aa).

Residues 26–46 constitute a DNA-binding region (H-T-H motif); it reads FDEMKEALDLASKSGIHRLIT. Residues serine 147 and lysine 185 each act as for autocatalytic cleavage activity in the active site.

This sequence belongs to the peptidase S24 family. Homodimer.

The catalysed reaction is Hydrolysis of Ala-|-Gly bond in repressor LexA.. Functionally, represses a number of genes involved in the response to DNA damage (SOS response), including recA and lexA. In the presence of single-stranded DNA, RecA interacts with LexA causing an autocatalytic cleavage which disrupts the DNA-binding part of LexA, leading to derepression of the SOS regulon and eventually DNA repair. The sequence is that of LexA repressor from Hyphomonas neptunium (strain ATCC 15444).